The primary structure comprises 137 residues: Acetyltransferase Atu2258 (137 aa).

The region spanning methionine 1–phenylalanine 137 is the N-acetyltransferase domain. CoA-binding positions include leucine 66–valine 68, glycine 74, and arginine 108–tyrosine 110.

Its function is as follows. Catalyzes the transfer of an acetyl group from acetyl coenzyme A (AcCoA) to an acceptor substrate and releases both CoA and the acetylated product. It prefers glucosamine 6-phosphate or dopamine. It can also use the thialysine, N(8)-acetylspermidine, chloramphenicol, puromycin, polymyxin B, and 4-aminobutyrate ethyl ester. This chain is Acetyltransferase Atu2258, found in Agrobacterium fabrum (strain C58 / ATCC 33970) (Agrobacterium tumefaciens (strain C58)).